Here is a 235-residue protein sequence, read N- to C-terminus: Enolase-phosphatase E1 (235 aa).

The protein belongs to the HAD-like hydrolase superfamily. MasA/MtnC family. Monomer. Mg(2+) serves as cofactor.

The enzyme catalyses 5-methylsulfanyl-2,3-dioxopentyl phosphate + H2O = 1,2-dihydroxy-5-(methylsulfanyl)pent-1-en-3-one + phosphate. Its pathway is amino-acid biosynthesis; L-methionine biosynthesis via salvage pathway; L-methionine from S-methyl-5-thio-alpha-D-ribose 1-phosphate: step 3/6. The protein operates within amino-acid biosynthesis; L-methionine biosynthesis via salvage pathway; L-methionine from S-methyl-5-thio-alpha-D-ribose 1-phosphate: step 4/6. In terms of biological role, bifunctional enzyme that catalyzes the enolization of 2,3-diketo-5-methylthiopentyl-1-phosphate (DK-MTP-1-P) into the intermediate 2-hydroxy-3-keto-5-methylthiopentenyl-1-phosphate (HK-MTPenyl-1-P), which is then dephosphorylated to form the acireductone 1,2-dihydroxy-3-keto-5-methylthiopentene (DHK-MTPene). The polypeptide is Enolase-phosphatase E1 (Gluconacetobacter diazotrophicus (strain ATCC 49037 / DSM 5601 / CCUG 37298 / CIP 103539 / LMG 7603 / PAl5)).